The chain runs to 271 residues: Ribosomal RNA small subunit methyltransferase A (271 aa).

The S-adenosyl-L-methionine site is built by Asn-28, Leu-30, Gly-54, Glu-75, Asp-99, and Asn-117.

It belongs to the class I-like SAM-binding methyltransferase superfamily. rRNA adenine N(6)-methyltransferase family. RsmA subfamily.

The protein resides in the cytoplasm. The catalysed reaction is adenosine(1518)/adenosine(1519) in 16S rRNA + 4 S-adenosyl-L-methionine = N(6)-dimethyladenosine(1518)/N(6)-dimethyladenosine(1519) in 16S rRNA + 4 S-adenosyl-L-homocysteine + 4 H(+). Specifically dimethylates two adjacent adenosines (A1518 and A1519) in the loop of a conserved hairpin near the 3'-end of 16S rRNA in the 30S particle. May play a critical role in biogenesis of 30S subunits. The chain is Ribosomal RNA small subunit methyltransferase A from Thermus thermophilus (strain ATCC BAA-163 / DSM 7039 / HB27).